We begin with the raw amino-acid sequence, 441 residues long: Proline--tRNA ligase (441 aa).

Belongs to the class-II aminoacyl-tRNA synthetase family. ProS type 2 subfamily. Homodimer.

The protein resides in the cytoplasm. It carries out the reaction tRNA(Pro) + L-proline + ATP = L-prolyl-tRNA(Pro) + AMP + diphosphate. In terms of biological role, catalyzes the attachment of proline to tRNA(Pro) in a two-step reaction: proline is first activated by ATP to form Pro-AMP and then transferred to the acceptor end of tRNA(Pro). The polypeptide is Proline--tRNA ligase (Methylobacterium radiotolerans (strain ATCC 27329 / DSM 1819 / JCM 2831 / NBRC 15690 / NCIMB 10815 / 0-1)).